The chain runs to 1290 residues: DNA-directed RNA polymerase subunit beta' (1290 aa).

Zn(2+) contacts are provided by C68, C70, C83, and C86. Positions 530, 532, and 534 each coordinate Mg(2+). The Zn(2+) site is built by C909, C985, C992, and C995.

The protein belongs to the RNA polymerase beta' chain family. As to quaternary structure, the RNAP catalytic core consists of 2 alpha, 1 beta, 1 beta' and 1 omega subunit. When a sigma factor is associated with the core the holoenzyme is formed, which can initiate transcription. The cofactor is Mg(2+). Requires Zn(2+) as cofactor.

The catalysed reaction is RNA(n) + a ribonucleoside 5'-triphosphate = RNA(n+1) + diphosphate. Functionally, DNA-dependent RNA polymerase catalyzes the transcription of DNA into RNA using the four ribonucleoside triphosphates as substrates. This Mycoplasma pneumoniae (strain ATCC 29342 / M129 / Subtype 1) (Mycoplasmoides pneumoniae) protein is DNA-directed RNA polymerase subunit beta'.